Consider the following 312-residue polypeptide: Tumor necrosis factor receptor type 1-associated DEATH domain protein (312 aa).

Residues 147–163 carry the Nuclear export signal motif; it reads LRDEELAELEDALRNLK. The tract at residues 170–195 is disordered; the sequence is GGDGEVASAPLQPPVPSLSEVKPPPP. The Death domain maps to 179-289; the sequence is PLQPPVPSLS…ATLQRLVEAL (111 aa). A compositionally biased stretch (pro residues) spans 180-195; that stretch reads LQPPVPSLSEVKPPPP. Residues 222–289 are interaction with KRT14 and KRT18; it reads FARSVGLKWR…ATLQRLVEAL (68 aa). The short motif at 231 to 244 is the Nuclear localization signal element; it reads RKVGRSLQRGCRAL. Arginine 235 and arginine 245 each carry a (Microbial infection) N-beta-linked (GlcNAc) arginine glycan.

As to quaternary structure, stimulation of TNF-alpha receptor TNFRSF1A leads to the formation of two distinct signaling complexes. Plasma membrane-bound complex I is composed of TNFRSF1A, TRADD, RIPK1, TRAF2 and BIRC2/c-IAP1 or BIRC3 which interacts with CHUCK/IKK-alpha, IKBKB/IKK-beta and IKBKG/IKK-gamma promoting cell survival. Subsequently, TRADD, RIPK1 and TRAF2 dissociate from TNFRSF1A and form cytoplasmic complex II with FADD and caspase CASP8 promoting cell apoptosis. Within complex I, interacts with TNFRSF1A/TNFR1, TRAF2 and kinase RIPK1. Within complex I, interacts with TRPC4AP; the interaction promotes NF-kappa B activation. UXT1 associates with complex I; the interaction prevents the formation of complex II. Within complex I Interacts with scaffold protein DAB2IP. Interacts with autophagy receptor SQSTM1. Interacts with E3 ligase TRIP12. Interacts with kinase HIPK2. Interacts with keratin KRT14. Interacts with keratin KRT18. Interacts with keratins KRT16 and KRT17. Interacts with FADD. Interacts with TOMM70. Interacts with TMC8; the interaction impairs the formation of complex I and facilites complex II formation. Post-translationally, (Microbial infection) Glycosylated at Arg-235 by enteropathogenic E.coli protein NleB1, C.rodentium protein NleB and S.typhimurium proteins Ssek1 and Ssek3: arginine GlcNAcylation prevents homotypic/heterotypic death domain interactions and assembly of the oligomeric TNFRSF1A/TNFR1 complex, thereby disrupting TNF signaling. In terms of tissue distribution, found in all examined tissues.

Its subcellular location is the nucleus. It is found in the cytoplasm. The protein localises to the cytoskeleton. In terms of biological role, adapter molecule for TNFRSF1A/TNFR1 that specifically associates with the cytoplasmic domain of activated TNFRSF1A/TNFR1 mediating its interaction with FADD. Overexpression of TRADD leads to two major TNF-induced responses, apoptosis and activation of NF-kappa-B. The nuclear form acts as a tumor suppressor by preventing ubiquitination and degradation of isoform p19ARF/ARF of CDKN2A by TRIP12: acts by interacting with TRIP12, leading to disrupt interaction between TRIP12 and isoform p19ARF/ARF of CDKN2A. The polypeptide is Tumor necrosis factor receptor type 1-associated DEATH domain protein (Homo sapiens (Human)).